A 286-amino-acid polypeptide reads, in one-letter code: Bifunctional protein FolD 2 (286 aa).

NADP(+) is bound by residues 165 to 167, T192, and I233; that span reads GRG.

The protein belongs to the tetrahydrofolate dehydrogenase/cyclohydrolase family. In terms of assembly, homodimer.

It catalyses the reaction (6R)-5,10-methylene-5,6,7,8-tetrahydrofolate + NADP(+) = (6R)-5,10-methenyltetrahydrofolate + NADPH. It carries out the reaction (6R)-5,10-methenyltetrahydrofolate + H2O = (6R)-10-formyltetrahydrofolate + H(+). The protein operates within one-carbon metabolism; tetrahydrofolate interconversion. Its function is as follows. Catalyzes the oxidation of 5,10-methylenetetrahydrofolate to 5,10-methenyltetrahydrofolate and then the hydrolysis of 5,10-methenyltetrahydrofolate to 10-formyltetrahydrofolate. This is Bifunctional protein FolD 2 from Salinispora arenicola (strain CNS-205).